Reading from the N-terminus, the 715-residue chain is Polyribonucleotide nucleotidyltransferase (715 aa).

Residues aspartate 488 and aspartate 494 each coordinate Mg(2+). The 60-residue stretch at 555 to 614 (PRIEVMHIPTDKIRDVIGSGGKVIREIVEKTGAKINIEDDGTVKIASSNAKEIEAAKKWI) folds into the KH domain. The S1 motif domain occupies 624 to 692 (GEIYEGTVVK…ERGKVRLSMK (69 aa)).

It belongs to the polyribonucleotide nucleotidyltransferase family. It depends on Mg(2+) as a cofactor.

The protein resides in the cytoplasm. The catalysed reaction is RNA(n+1) + phosphate = RNA(n) + a ribonucleoside 5'-diphosphate. In terms of biological role, involved in mRNA degradation. Catalyzes the phosphorolysis of single-stranded polyribonucleotides processively in the 3'- to 5'-direction. The polypeptide is Polyribonucleotide nucleotidyltransferase (Mesorhizobium japonicum (strain LMG 29417 / CECT 9101 / MAFF 303099) (Mesorhizobium loti (strain MAFF 303099))).